A 245-amino-acid polypeptide reads, in one-letter code: Phosphoribosylaminoimidazole-succinocarboxamide synthase (245 aa).

The protein belongs to the SAICAR synthetase family.

The enzyme catalyses 5-amino-1-(5-phospho-D-ribosyl)imidazole-4-carboxylate + L-aspartate + ATP = (2S)-2-[5-amino-1-(5-phospho-beta-D-ribosyl)imidazole-4-carboxamido]succinate + ADP + phosphate + 2 H(+). It functions in the pathway purine metabolism; IMP biosynthesis via de novo pathway; 5-amino-1-(5-phospho-D-ribosyl)imidazole-4-carboxamide from 5-amino-1-(5-phospho-D-ribosyl)imidazole-4-carboxylate: step 1/2. The protein is Phosphoribosylaminoimidazole-succinocarboxamide synthase of Trichormus variabilis (strain ATCC 29413 / PCC 7937) (Anabaena variabilis).